We begin with the raw amino-acid sequence, 247 residues long: Phosphoglycerate mutase 1 (247 aa).

Substrate contacts are provided by residues 8–15 (RHGQSEWN) and 21–22 (TG). The Tele-phosphohistidine intermediate role is filled by His-9. Ser-12 bears the Phosphoserine mark. Residue Lys-31 forms a Glycyl lysine isopeptide (Lys-Gly) (interchain with G-Cter in ubiquitin) linkage. Position 49 is a phosphotyrosine (Tyr-49). Residue Lys-57 forms a Glycyl lysine isopeptide (Lys-Gly) (interchain with G-Cter in ubiquitin) linkage. Residue Arg-60 participates in substrate binding. Lys-71 participates in a covalent cross-link: Glycyl lysine isopeptide (Lys-Gly) (interchain with G-Cter in ubiquitin). Glu-87 acts as the Proton donor/acceptor in catalysis. Substrate-binding positions include 87–90 (ERHY), Lys-98, and 114–115 (RR). Phosphoserine occurs at positions 116, 127, and 128. Residues Lys-139 and Lys-175 each participate in a glycyl lysine isopeptide (Lys-Gly) (interchain with G-Cter in ubiquitin) cross-link. Position 183 to 184 (183 to 184 (GN)) interacts with substrate. At Ser-185 the chain carries Phosphoserine. Residue Lys-191 forms a Glycyl lysine isopeptide (Lys-Gly) (interchain with G-Cter in ubiquitin) linkage. Ser-197 carries the post-translational modification Phosphoserine.

It belongs to the phosphoglycerate mutase family. BPG-dependent PGAM subfamily. In terms of assembly, homotetramer: dimer of dimers.

Its subcellular location is the cytoplasm. The protein resides in the mitochondrion outer membrane. The protein localises to the mitochondrion intermembrane space. It catalyses the reaction (2R)-2-phosphoglycerate = (2R)-3-phosphoglycerate. It functions in the pathway carbohydrate degradation; glycolysis; pyruvate from D-glyceraldehyde 3-phosphate: step 3/5. Its activity is regulated as follows. Inhibited by inositol hexakisphosphate and benzene tri-, tetra- and hexacarboxylates. In terms of biological role, interconversion of 3- and 2-phosphoglycerate with 2,3-bisphosphoglycerate as the primer of the reaction. Can also catalyze the reaction of EC 5.4.2.4 (synthase), but with a reduced activity. In Saccharomyces cerevisiae (strain ATCC 204508 / S288c) (Baker's yeast), this protein is Phosphoglycerate mutase 1 (GPM1).